The primary structure comprises 162 residues: MGLETEKADVQLFMDDDAYSHHSGVDFADPEKFPDTGPDRDPHGLNSHLKLGFEDVIAEPVTTHSFDKVWICSHALFEISKYVLYKFLTVFLAIPLAFAAGVLFAVLSCLHIWILMPFVKTCLMVLPSVQTIWRSVTDVVIAPLCASIGRSFSSVGLQLSHD.

Residues 1-86 are Cytoplasmic-facing; that stretch reads MGLETEKADV…FEISKYVLYK (86 aa). Phosphotyrosine; by SRC is present on Y19. Phosphoserine occurs at positions 20 and 23. The segment at residues 87 to 107 is an intramembrane region (helical); it reads FLTVFLAIPLAFAAGVLFAVL. Over 108–162 the chain is Cytoplasmic; the sequence is SCLHIWILMPFVKTCLMVLPSVQTIWRSVTDVVIAPLCASIGRSFSSVGLQLSHD.

Belongs to the caveolin family. Monomer or homodimer. Interacts with CAV1; the interaction forms a stable heterooligomeric complex that is required for targeting to lipid rafts and for caveolae formation. Tyrosine phosphorylated forms do not form heterooligomers with the Tyr-19-phosphorylated form existing as a monomer or dimer. Interacts (tyrosine phosphorylated form) with the SH2 domain-containing proteins, RASA1, NCK1 and SRC. Interacts (tyrosine phosphorylated form) with INSR. Interacts (Tyr-19 phosphorylated form) with MAPK1 (phosphorylated form); the interaction, promoted by insulin, leads to nuclear location and MAPK1 activation. Interacts with STAT3; the interaction is increased on insulin-induced tyrosine phosphorylation leading to STAT activation. Post-translationally, phosphorylated on serine and tyrosine residues. CAV1 promotes phosphorylation on Ser-23 which then targets the complex to the plasma membrane, lipid rafts and caveolae. Phosphorylation on Tyr-19 is required for insulin-induced phosphorylation of MAPK1 and DNA binding of STAT3. Tyrosine phosphorylation is induced by both EGF and insulin.

The protein localises to the nucleus. It is found in the cytoplasm. It localises to the golgi apparatus membrane. Its subcellular location is the cell membrane. The protein resides in the membrane. The protein localises to the caveola. In terms of biological role, may act as a scaffolding protein within caveolar membranes. Interacts directly with G-protein alpha subunits and can functionally regulate their activity. Acts as an accessory protein in conjunction with CAV1 in targeting to lipid rafts and driving caveolae formation. Positive regulator of cellular mitogenesis of the MAPK signaling pathway. Required for the insulin-stimulated nuclear translocation and activation of MAPK1 and STAT3, and the subsequent regulation of cell cycle progression. This is Caveolin-2 (CAV2) from Oryctolagus cuniculus (Rabbit).